Consider the following 202-residue polypeptide: Glycerol-3-phosphate acyltransferase (202 aa).

6 helical membrane passes run 2–22, 54–74, 85–105, 120–140, 141–161, and 162–182; these read MIVVMLILSYLIGAIPNGYVI, FIVTFLDIFKGFITVFFPIWF, FFTHGLIVGLFAILGHVYPIY, VVLGVNPILLLILAIIFFGVL, YIFKYVSLSSIIAAICCVIGS, and LIIQDYILFGMSLLVSIILIV.

It belongs to the PlsY family. As to quaternary structure, probably interacts with PlsX.

Its subcellular location is the cell membrane. The enzyme catalyses an acyl phosphate + sn-glycerol 3-phosphate = a 1-acyl-sn-glycero-3-phosphate + phosphate. It participates in lipid metabolism; phospholipid metabolism. Its function is as follows. Catalyzes the transfer of an acyl group from acyl-phosphate (acyl-PO(4)) to glycerol-3-phosphate (G3P) to form lysophosphatidic acid (LPA). This enzyme utilizes acyl-phosphate as fatty acyl donor, but not acyl-CoA or acyl-ACP. This is Glycerol-3-phosphate acyltransferase from Staphylococcus haemolyticus (strain JCSC1435).